An 87-amino-acid chain; its full sequence is MQRNFRKTFVGKVVSDKMDKTITVIVDIYKKDPLYGKRVKQSKKFHVHDENQEAKPGDLVNFMETRPLSKTKRFRLFKILYHSKSAN.

This sequence belongs to the universal ribosomal protein uS17 family. In terms of assembly, part of the 30S ribosomal subunit.

Functionally, one of the primary rRNA binding proteins, it binds specifically to the 5'-end of 16S ribosomal RNA. This chain is Small ribosomal subunit protein uS17, found in Aster yellows witches'-broom phytoplasma (strain AYWB).